We begin with the raw amino-acid sequence, 340 residues long: Ketol-acid reductoisomerase (NADP(+)) (340 aa).

A KARI N-terminal Rossmann domain is found at 1–182 (MRVYYDRDCD…GGGRSGIIET (182 aa)). NADP(+) contacts are provided by residues 24-27 (YGSQ), Arg-48, Ser-51, Ser-53, and 83-86 (DELQ). His-108 is a catalytic residue. Gly-134 serves as a coordination point for NADP(+). A KARI C-terminal knotted domain is found at 183 to 329 (NFREECETDL…ETLRGMMPWI (147 aa)). Mg(2+) is bound by residues Asp-191, Glu-195, Glu-227, and Glu-231. A substrate-binding site is contributed by Ser-252.

This sequence belongs to the ketol-acid reductoisomerase family. Mg(2+) serves as cofactor.

It carries out the reaction (2R)-2,3-dihydroxy-3-methylbutanoate + NADP(+) = (2S)-2-acetolactate + NADPH + H(+). The catalysed reaction is (2R,3R)-2,3-dihydroxy-3-methylpentanoate + NADP(+) = (S)-2-ethyl-2-hydroxy-3-oxobutanoate + NADPH + H(+). It functions in the pathway amino-acid biosynthesis; L-isoleucine biosynthesis; L-isoleucine from 2-oxobutanoate: step 2/4. The protein operates within amino-acid biosynthesis; L-valine biosynthesis; L-valine from pyruvate: step 2/4. Functionally, involved in the biosynthesis of branched-chain amino acids (BCAA). Catalyzes an alkyl-migration followed by a ketol-acid reduction of (S)-2-acetolactate (S2AL) to yield (R)-2,3-dihydroxy-isovalerate. In the isomerase reaction, S2AL is rearranged via a Mg-dependent methyl migration to produce 3-hydroxy-3-methyl-2-ketobutyrate (HMKB). In the reductase reaction, this 2-ketoacid undergoes a metal-dependent reduction by NADPH to yield (R)-2,3-dihydroxy-isovalerate. This chain is Ketol-acid reductoisomerase (NADP(+)), found in Jannaschia sp. (strain CCS1).